A 413-amino-acid polypeptide reads, in one-letter code: Tyrosine--tRNA ligase (413 aa).

Residues 59 to 68 (PTAPDIHLGH) carry the 'HIGH' region motif. Positions 243–247 (KMSKS) match the 'KMSKS' region motif. Residue Lys246 coordinates ATP. The region spanning 351-411 (LAIGQLLKQA…GKRRFARVTL (61 aa)) is the S4 RNA-binding domain.

It belongs to the class-I aminoacyl-tRNA synthetase family. TyrS type 2 subfamily. In terms of assembly, homodimer.

Its subcellular location is the cytoplasm. It carries out the reaction tRNA(Tyr) + L-tyrosine + ATP = L-tyrosyl-tRNA(Tyr) + AMP + diphosphate + H(+). Its function is as follows. Catalyzes the attachment of tyrosine to tRNA(Tyr) in a two-step reaction: tyrosine is first activated by ATP to form Tyr-AMP and then transferred to the acceptor end of tRNA(Tyr). The protein is Tyrosine--tRNA ligase of Burkholderia pseudomallei (strain 1710b).